We begin with the raw amino-acid sequence, 751 residues long: Nibrin (751 aa).

The 60-residue stretch at 24–83 (YVVGRKNCGILIENDQSISRNHAVLTVNFPVTSLSQTDEIPTLTIKDNSKYGTFVNEEKM) folds into the FHA domain. 2 BRCT domains span residues 105-181 (KFRV…SEFL) and 224-315 (GKTF…LAVI). The segment at 111–328 (EPLVVCSSCL…TENYCNPQGQ (218 aa)) is mediates interaction with SP100. The segment at 221 to 403 (IFKGKTFVFL…SRKLSQETFN (183 aa)) is interaction with MTOR, MAPKAP1 and RICTOR. The residue at position 337 (Thr337) is a Phosphothreonine. Ser343 carries the post-translational modification Phosphoserine; by ATM. Residues Ser347 and Ser398 each carry the phosphoserine modification. Positions 389 to 418 (GLEQSSRKLSQETFNIKEAPKPSSKANNVA) are disordered. The residue at position 433 (Ser433) is a Phosphoserine; by CDK2. Lys436 is covalently cross-linked (Glycyl lysine isopeptide (Lys-Gly) (interchain with G-Cter in ubiquitin)). Disordered stretches follow at residues 444 to 479 (KDWT…SSCK) and 491 to 550 (EQTQ…RKRK). Residues 446 to 457 (WTSQQQQNSIKN) are compositionally biased toward polar residues. The Nuclear localization signal motif lies at 461–467 (PCTRKRE). Composition is skewed to basic and acidic residues over residues 502 to 518 (KSKE…READ) and 528 to 539 (ELNRKSPDRKPL). The residue at position 508 (Ser508) is a Phosphoserine. Glycyl lysine isopeptide (Lys-Gly) (interchain with G-Cter in SUMO2) cross-links involve residues Lys569 and Lys580. Positions 576–645 (VKVEKQEADD…ANSDGLQDSS (70 aa)) are disordered. Composition is skewed to basic and acidic residues over residues 577-599 (KVEK…ERNR) and 615-636 (EDER…HEIA). Residues Lys684, Lys688, and Lys733 each participate in a glycyl lysine isopeptide (Lys-Gly) (interchain with G-Cter in ubiquitin) cross-link. Residues 731-742 (QAKEESLADDLF) are compositionally biased toward basic and acidic residues. A disordered region spans residues 731–751 (QAKEESLADDLFRYNPNVKRR). Positions 738 to 747 (ADDLFRYNPN) match the FxF/Y motif motif.

Belongs to the Nibrin family. As to quaternary structure, component of the MRN complex composed of two heterodimers RAD50 and MRE11 associated with a single NBN. The MRN complexes dimerize on DNA to form joined MRN-MRN oligomers required for DNA double-strand break repair. As part of the MRN complex, interacts with MCM9; the interaction recruits the complex to DNA repair sites. Component of the BASC complex, at least composed of BRCA1, MSH2, MSH6, MLH1, ATM, BLM, RAD50, MRE11 and NBN. Interacts with histone H2AX; this requires phosphorylation of H2AX on 'Ser-139' and promotes NBN recruitment to DNA damage sites. Interacts with (phosphorylated) MDC1; promoting NBN recruitment to DNA damage sites. Interacts with (phosphorylated) RAD17; promoting NBN recruitment to DNA damage sites. Interacts (via FxF/Y motif) with ATM. Interacts with HJURP. Interacts with INTS3. Interacts with KPNA2. Interacts with TERF2; interaction is disrupted upon NBN phosphorylation by CDK2. Interacts with (phosphorylated) RBBP8/CtIP; the interaction links the role of the MRN complex in DNA double-strand break sensing to resection. Interacts with SP100; recruits NBN to PML bodies. Interacts with ATF2. Interacts with MTOR, MAPKAP1 isoform 2 and RICTOR; indicative for an association with the mTORC2 complex. Interacts with MRNIP. Interacts with UFL1; promoting UFL1 recruitment to double-strand breaks following DNA damage. Interacts with CYREN (via XLF motif). Ubiquitinated at Lys-436 via 'Lys-6'-linked ubiquitin chains by RNF8, promoting NBN recruitment to DNA double-strand breaks (DSBs). Ubiquitinated at Lys-684 and Lys-688 via 'Lys-63'-linked ubiquitin chains by PELI1: ubiquitination takes place following PELI1 phosphorylation and promotes ATM activation and DNA repair. Ubiquitinated at Lys-733 via 'Lys-63'-linked ubiquitin chains by the SCF(SKP2) complex: ubiquitination takes place following SKP2 phosphorylation and promotes ATM activation and DNA repair. Post-translationally, phosphorylated by ATM in response of ionizing radiation, and such phosphorylation is responsible intra-S phase checkpoint control and telomere maintenance. Phosphorylated at Ser-433 by CDK2 in S/G2 phases abolishes interaction with TERF2, enabling DCLRE1B/Apollo recruitment to telomeres. Phosphorylation at Ser-433 in response to dysfunctional telomeres promotes non-homologous end joining repair at telomeres, while dephosphorylation by PPP1CA promotes microhomology-mediated end-joining (MMEJ) repair. As to expression, high expression in the liver, heart and testis. Low expression in all other tissues analyzed. In the cerebellum the postmitotic Purkinje cells are marked specifically.

The protein localises to the nucleus. It localises to the chromosome. It is found in the PML body. Its subcellular location is the telomere. Component of the MRN complex, which plays a central role in double-strand break (DSB) repair, DNA recombination, maintenance of telomere integrity and meiosis. The MRN complex is involved in the repair of DNA double-strand breaks (DSBs) via homologous recombination (HR), an error-free mechanism which primarily occurs during S and G2 phases. The complex (1) mediates the end resection of damaged DNA, which generates proper single-stranded DNA, a key initial steps in HR, and is (2) required for the recruitment of other repair factors and efficient activation of ATM and ATR upon DNA damage. The MRN complex possesses single-strand endonuclease activity and double-strand-specific 3'-5' exonuclease activity, which are provided by MRE11, to initiate end resection, which is required for single-strand invasion and recombination. Within the MRN complex, NBN acts as a protein-protein adapter, which specifically recognizes and binds phosphorylated proteins, promoting their recruitment to DNA damage sites. Recruits MRE11 and RAD50 components of the MRN complex to DSBs in response to DNA damage. Promotes the recruitment of PI3/PI4-kinase family members ATM, ATR, and probably DNA-PKcs to the DNA damage sites, activating their functions. Mediates the recruitment of phosphorylated RBBP8/CtIP to DSBs, leading to cooperation between the MRN complex and RBBP8/CtIP to initiate end resection. RBBP8/CtIP specifically promotes the endonuclease activity of the MRN complex to clear DNA ends containing protein adducts. The MRN complex is also required for the processing of R-loops. NBN also functions in telomere length maintenance via its interaction with TERF2: interaction with TERF2 during G1 phase preventing recruitment of DCLRE1B/Apollo to telomeres. NBN also promotes DNA repair choice at dysfunctional telomeres: NBN phosphorylation by CDK2 promotes non-homologous end joining repair at telomeres, while unphosphorylated NBN promotes microhomology-mediated end-joining (MMEJ) repair. Enhances AKT1 phosphorylation possibly by association with the mTORC2 complex. The protein is Nibrin of Mus musculus (Mouse).